The sequence spans 202 residues: Imidazole glycerol phosphate synthase subunit HisH (202 aa).

One can recognise a Glutamine amidotransferase type-1 domain in the interval 3–202 (RIVIIDYGLG…KILKNFVEMC (200 aa)). C79 acts as the Nucleophile in catalysis. Catalysis depends on residues H183 and E185.

Heterodimer of HisH and HisF.

The protein localises to the cytoplasm. It catalyses the reaction 5-[(5-phospho-1-deoxy-D-ribulos-1-ylimino)methylamino]-1-(5-phospho-beta-D-ribosyl)imidazole-4-carboxamide + L-glutamine = D-erythro-1-(imidazol-4-yl)glycerol 3-phosphate + 5-amino-1-(5-phospho-beta-D-ribosyl)imidazole-4-carboxamide + L-glutamate + H(+). The catalysed reaction is L-glutamine + H2O = L-glutamate + NH4(+). It participates in amino-acid biosynthesis; L-histidine biosynthesis; L-histidine from 5-phospho-alpha-D-ribose 1-diphosphate: step 5/9. Functionally, IGPS catalyzes the conversion of PRFAR and glutamine to IGP, AICAR and glutamate. The HisH subunit catalyzes the hydrolysis of glutamine to glutamate and ammonia as part of the synthesis of IGP and AICAR. The resulting ammonia molecule is channeled to the active site of HisF. The polypeptide is Imidazole glycerol phosphate synthase subunit HisH (Methanosarcina acetivorans (strain ATCC 35395 / DSM 2834 / JCM 12185 / C2A)).